Reading from the N-terminus, the 113-residue chain is Large ribosomal subunit protein uL22 (113 aa).

It belongs to the universal ribosomal protein uL22 family. In terms of assembly, part of the 50S ribosomal subunit.

This protein binds specifically to 23S rRNA; its binding is stimulated by other ribosomal proteins, e.g. L4, L17, and L20. It is important during the early stages of 50S assembly. It makes multiple contacts with different domains of the 23S rRNA in the assembled 50S subunit and ribosome. In terms of biological role, the globular domain of the protein is located near the polypeptide exit tunnel on the outside of the subunit, while an extended beta-hairpin is found that lines the wall of the exit tunnel in the center of the 70S ribosome. The polypeptide is Large ribosomal subunit protein uL22 (Thermus thermophilus (strain ATCC BAA-163 / DSM 7039 / HB27)).